We begin with the raw amino-acid sequence, 328 residues long: MTDTRKPPRKKPQRPAKPAAPREKATLHPRNRHQGQYDFAKLIKSSPELAAFVILNPYGKESIDFANPQAVRVFNRALLKAFYGIAHWDIPADYLCPPIPGRADYLHFLADLLAEDNEGVIPRGASIKALDIGTGANCIYPLLGHSDYGWQFVGSDIDSTAIAAATTIVKANGLSKAISVRQQANRRQILLGLLDSSERFHVSLCNPPFHASLEEAQRGSQRKWRALGKADPKRKLPVLNFGGQSQELWCDGGEIGFITQLIQESALLPSQVAWFSTLVSKASNLPPIHSALKKAGALEVKVVEMGQGQKQSRFVAWTFLDKAQRAPG.

Positions 1–31 (MTDTRKPPRKKPQRPAKPAAPREKATLHPRN) are disordered.

The protein belongs to the methyltransferase superfamily. METTL16/RlmF family.

The protein resides in the cytoplasm. The catalysed reaction is adenosine(1618) in 23S rRNA + S-adenosyl-L-methionine = N(6)-methyladenosine(1618) in 23S rRNA + S-adenosyl-L-homocysteine + H(+). Specifically methylates the adenine in position 1618 of 23S rRNA. The sequence is that of Ribosomal RNA large subunit methyltransferase F from Pseudomonas syringae pv. syringae (strain B728a).